A 178-amino-acid chain; its full sequence is Putative metal-dependent hydrolase GK0616 (178 aa).

The Zn(2+) site is built by histidine 68, histidine 161, and histidine 165.

Belongs to the metal hydrolase YfiT family. In terms of assembly, homodimer. The cofactor is Zn(2+).

The protein resides in the cytoplasm. Functionally, possible metal-dependent hydrolase. The protein is Putative metal-dependent hydrolase GK0616 of Geobacillus kaustophilus (strain HTA426).